We begin with the raw amino-acid sequence, 327 residues long: Protein hunchback (327 aa).

C2H2-type zinc fingers lie at residues 1-5, 11-33, and 39-63; these read HMRNH, FQCS…LKSH, and YRCA…KYQH. Disordered regions lie at residues 91-121, 143-170, and 182-290; these read KQKP…HPIF, PPNN…MSPP, and ERPL…EVAS. 2 stretches are compositionally biased toward basic and acidic residues: residues 205 to 216 and 265 to 276; these read THREMPTEHGDD and LQHEDEKMRDAD. 2 C2H2-type zinc fingers span residues 297–319 and 325–327; these read YTCQ…MGFH and FMC.

This sequence belongs to the hunchback C2H2-type zinc-finger protein family.

The protein resides in the nucleus. Gap class segmentation protein that controls development of head structures. This chain is Protein hunchback (hb), found in Manduca sexta (Tobacco hawkmoth).